A 197-amino-acid chain; its full sequence is Phosphoheptose isomerase (197 aa).

The SIS domain occupies 34–196 (MVHCLLGGNK…DRTLFPQDEQ (163 aa)). Residue 49–51 (NGG) participates in substrate binding. Positions 58 and 62 each coordinate Zn(2+). Substrate contacts are provided by residues E62, 91-92 (ND), 117-119 (STS), S122, and Q172. Residues Q172 and H180 each contribute to the Zn(2+) site.

This sequence belongs to the SIS family. GmhA subfamily. As to quaternary structure, homotetramer. Requires Zn(2+) as cofactor.

The protein localises to the cytoplasm. The enzyme catalyses 2 D-sedoheptulose 7-phosphate = D-glycero-alpha-D-manno-heptose 7-phosphate + D-glycero-beta-D-manno-heptose 7-phosphate. Its pathway is carbohydrate biosynthesis; D-glycero-D-manno-heptose 7-phosphate biosynthesis; D-glycero-alpha-D-manno-heptose 7-phosphate and D-glycero-beta-D-manno-heptose 7-phosphate from sedoheptulose 7-phosphate: step 1/1. Catalyzes the isomerization of sedoheptulose 7-phosphate in D-glycero-D-manno-heptose 7-phosphate. In Shewanella baltica (strain OS223), this protein is Phosphoheptose isomerase.